Reading from the N-terminus, the 237-residue chain is Orotidine 5'-phosphate decarboxylase (237 aa).

Substrate-binding positions include aspartate 10, lysine 33, 60-69 (DLKLHDIPNT), threonine 124, arginine 186, glutamine 195, glycine 215, and arginine 216. Catalysis depends on lysine 62, which acts as the Proton donor.

It belongs to the OMP decarboxylase family. Type 1 subfamily. In terms of assembly, homodimer.

The enzyme catalyses orotidine 5'-phosphate + H(+) = UMP + CO2. The protein operates within pyrimidine metabolism; UMP biosynthesis via de novo pathway; UMP from orotate: step 2/2. Catalyzes the decarboxylation of orotidine 5'-monophosphate (OMP) to uridine 5'-monophosphate (UMP). This chain is Orotidine 5'-phosphate decarboxylase, found in Lactiplantibacillus plantarum (strain ATCC BAA-793 / NCIMB 8826 / WCFS1) (Lactobacillus plantarum).